A 107-amino-acid polypeptide reads, in one-letter code: Cysteine proteinase inhibitor (107 aa).

The Cystatin domain occupies 18–107 (GGVQDAPAGR…KQLQEFKPAA (90 aa)). The Secondary area of contact motif lies at 63–67 (QVVAG).

Belongs to the cystatin family. Phytocystatin subfamily. Expressed in embryos, developing endosperms, leaves, roots, flowers and pollen grains.

In terms of biological role, inhibits papain, ficin, cathepsin B and, to a lesser extent, chymopapain, but is inactive against bromelain. Inhibits the growth of pathogenic fungi. Regulated by the DOF transcription factors SAD (activator) and BPBF (repressor). This is Cysteine proteinase inhibitor (ICY) from Hordeum vulgare (Barley).